The following is a 162-amino-acid chain: Auracyanin-A (162 aa).

The signal sequence occupies residues Met-1–Ala-22. Cys-23 carries the N-palmitoyl cysteine lipid modification. A lipid anchor (S-diacylglycerol cysteine) is attached at Cys-23. The region spanning Val-42–Asn-162 is the Plastocyanin-like domain. Residues His-81, Cys-146, His-151, and Met-155 each coordinate Cu cation.

As to quaternary structure, monomer. The cofactor is Cu cation.

It is found in the cell membrane. In terms of biological role, probably a soluble electron acceptor for the integral membrane protein electron transfer alternative complex III (ACIII). This chain is Auracyanin-A, found in Chloroflexus aurantiacus (strain ATCC 29366 / DSM 635 / J-10-fl).